A 228-amino-acid chain; its full sequence is Clathrin light chain B (228 aa).

Blocked amino end (Met) is present on Met-1. Low complexity predominate over residues 1-17 (MADDFGFFSSSESGAPE). The segment at 1–80 (MADDFGFFSS…VNGDVFQEAN (80 aa)) is disordered. Phosphoserine is present on residues Ser-11 and Ser-13. The involved in binding clathrin heavy chain stretch occupies residues 92–154 (ADRLTQEPES…QVEKNKINNR (63 aa)). Thr-186 is modified (phosphothreonine). A disulfide bond links Cys-198 and Cys-208. Lys-203 is modified (N6-acetyllysine). Position 216 is a phosphoserine (Ser-216).

It belongs to the clathrin light chain family. Clathrin coats are formed from molecules containing 3 heavy chains and 3 light chains. Interacts (via N-terminus) with HIP1. Interacts with HIP1R.

The protein localises to the cytoplasmic vesicle membrane. It localises to the membrane. The protein resides in the coated pit. In terms of biological role, clathrin is the major protein of the polyhedral coat of coated pits and vesicles. In Bos taurus (Bovine), this protein is Clathrin light chain B (CLTB).